A 209-amino-acid polypeptide reads, in one-letter code: Uracil phosphoribosyltransferase (209 aa).

5-phospho-alpha-D-ribose 1-diphosphate-binding positions include Arg-79, Arg-104, and 131–139 (DPMLATGGS). Residues Ile-194 and 199–201 (GDA) contribute to the uracil site. Residue Asp-200 coordinates 5-phospho-alpha-D-ribose 1-diphosphate.

It belongs to the UPRTase family. Requires Mg(2+) as cofactor.

The catalysed reaction is UMP + diphosphate = 5-phospho-alpha-D-ribose 1-diphosphate + uracil. It functions in the pathway pyrimidine metabolism; UMP biosynthesis via salvage pathway; UMP from uracil: step 1/1. Allosterically activated by GTP. In terms of biological role, catalyzes the conversion of uracil and 5-phospho-alpha-D-ribose 1-diphosphate (PRPP) to UMP and diphosphate. This chain is Uracil phosphoribosyltransferase, found in Levilactobacillus brevis (strain ATCC 367 / BCRC 12310 / CIP 105137 / JCM 1170 / LMG 11437 / NCIMB 947 / NCTC 947) (Lactobacillus brevis).